We begin with the raw amino-acid sequence, 144 residues long: Actin-associated protein FAM107A (144 aa).

The stretch at 66 to 112 (ELQRVLEHRRRNQLIKKKKEELEAKRLQCPFEQELLRRQQRLNQLEK) forms a coiled coil. The Nuclear localization signal motif lies at 74–84 (RRRNQLIKKKK). Residues 105–124 (QRLNQLEKPPEKEEDHAPEF) are disordered. Positions 112–124 (KPPEKEEDHAPEF) are enriched in basic and acidic residues.

It belongs to the FAM107 family. Interacts with ACTB. Interacts with COMMD1; this interaction stabilizes COMMD1 in the nucleus. Interacts with MAP1A. Interacts with PRDX1. Interacts with F-actin. Widely expressed. Expressed in neurons. Expressed in malignant glial tumors. Expression is reduced or absent in a number of cancer cell lines.

It localises to the nucleus. The protein localises to the cytoplasm. It is found in the cytoskeleton. The protein resides in the stress fiber. Its subcellular location is the cell junction. It localises to the focal adhesion. The protein localises to the cell projection. It is found in the ruffle membrane. The protein resides in the synapse. Stress-inducible actin-binding protein that plays a role in synaptic and cognitive functions by modulating actin filamentous (F-actin) dynamics. Mediates polymerization of globular actin to F-actin. Also binds to, stabilizes and bundles F-actin. Involved in synaptic function by regulating neurite outgrowth in an actin-dependent manner and for the acquisition of hippocampus-dependent cognitive function, such as learning and long-term memory. Plays a role in the actin and microtubule cytoskeleton organization; negatively regulates focal adhesion (FA) assembly promoting malignant glial cell migration in an actin-, microtubule- and MAP1A-dependent manner. Also involved in neuroblastoma G1/S phase cell cycle progression and cell proliferation inhibition by stimulating ubiquitination of NF-kappa-B subunit RELA and NF-kappa-B degradation in a COMMD1- and actin-dependent manner. May play a role in tumor development. This Homo sapiens (Human) protein is Actin-associated protein FAM107A.